A 329-amino-acid chain; its full sequence is MKITIIGSGAWGSTLAQVLTDNNNQVLLYDINLSYVEKINQGKHPIFNAPLVNVKAVSCLKQALDYSDLIVLSVPMKFMRHLLKQIALMLTTPKSFVNVSKGIEPLTFLRVSEIVKQVIPAPLLANFASLMGPSHAEEVILRKLTLLTAASSNPAFALEIQKLFSCPNYLKVYTSSDLVGNEICSAFKNVLAFINGILVAKNFGINSQAALMSRGILEMSVLVTFYQGNPQTVLGLPGLGDLIVTAFSKYSRNFNAGAKIAAGITYQQIIDSSLQTIEGFQTLNAFYQLQLKHNLDLPIIQASYQLIFESKPFETVFATLMQRPFKSEF.

Residues Trp-11 and Lys-101 each coordinate NADPH. Lys-101, Gly-132, and Ser-134 together coordinate sn-glycerol 3-phosphate. Ala-136 contributes to the NADPH binding site. Sn-glycerol 3-phosphate contacts are provided by Lys-188, Asp-241, Ser-251, Arg-252, and Asn-253. Lys-188 acts as the Proton acceptor in catalysis. Arg-252 provides a ligand contact to NADPH. Glu-278 contacts NADPH.

This sequence belongs to the NAD-dependent glycerol-3-phosphate dehydrogenase family.

Its subcellular location is the cytoplasm. The enzyme catalyses sn-glycerol 3-phosphate + NAD(+) = dihydroxyacetone phosphate + NADH + H(+). It catalyses the reaction sn-glycerol 3-phosphate + NADP(+) = dihydroxyacetone phosphate + NADPH + H(+). It functions in the pathway membrane lipid metabolism; glycerophospholipid metabolism. Its function is as follows. Catalyzes the reduction of the glycolytic intermediate dihydroxyacetone phosphate (DHAP) to sn-glycerol 3-phosphate (G3P), the key precursor for phospholipid synthesis. This is Glycerol-3-phosphate dehydrogenase [NAD(P)+] from Onion yellows phytoplasma (strain OY-M).